Here is an 89-residue protein sequence, read N- to C-terminus: MTNSVYFQLDSVESLIDELPYMYYLGLFFVNVLILYYAFLMEYIVLNVGIVFLPEDMDQALVDLGVLSDPASIPYDTDTELDVFEGYLE.

Belongs to the DEXI family.

The polypeptide is Dexamethasone-induced protein homolog (dexi) (Danio rerio (Zebrafish)).